We begin with the raw amino-acid sequence, 149 residues long: Protein FAM72C (149 aa).

It belongs to the FAM72 family.

The chain is Protein FAM72C (FAM72C) from Homo sapiens (Human).